We begin with the raw amino-acid sequence, 326 residues long: Homeobox protein Hox-A1 (326 aa).

Positions 196–201 match the Antp-type hexapeptide motif; it reads TFDWMK. A DNA-binding region (homeobox) is located at residues 221 to 280; the sequence is PNTVRTNFTTKQLTELEKEFHFNKYLTRARRVEIAAALQLNETQVKIWFQNRRMKQKKRE. Positions 273–326 are disordered; that stretch reads RMKQKKREKEGLTSASPATPGSEANTEDTSDKCNSTSSTPSPSSSTSETINTSG. The segment covering 285–296 has biased composition (polar residues); the sequence is TSASPATPGSEA. The span at 306–326 shows a compositional bias: low complexity; it reads NSTSSTPSPSSSTSETINTSG.

Belongs to the Antp homeobox family. Labial subfamily.

It localises to the nucleus. In terms of biological role, sequence-specific transcription factor. Part of a developmental regulatory system that provides cells with specific positional identities on the anterior-posterior axis. Acts on the anterior body structures. Seems to act in the maintenance and/or generation of hindbrain segments. This is Homeobox protein Hox-A1 (HOXA1) from Heterodontus francisci (Horn shark).